A 643-amino-acid chain; its full sequence is Probable potassium transport system protein Kup 2 (643 aa).

The tract at residues 1–20 (MSSHVPSFLRGTPDMTAHGG) is disordered. 12 helical membrane-spanning segments follow: residues 27–47 (VAGLMLAAIGVVFGDIGTSPL), 70–90 (VLSLVFWAITIIVSFKYVIII), 120–140 (LMVSALGIFAAALFYGDSIIT), 157–177 (PHLEQWVVPLTIVILFVLFAI), 185–205 (VGKMFGPVMLVWFLTLAILGI), 231–251 (GWHAFLALGSVVLAVTGAEAL), 267–287 (WYLLVLPALILNYFGQGALLI), 300–320 (LAPASLALPLVILATLATVIA), 357–377 (IYLPFVNWLLMCMVMVLVVGF), 389–409 (VAVTGTMVIDALLVGTVMLLI), 419–439 (WLIGGFLVVDLAFFLANSIKI), and 440–460 (PDGGWFPLVVGGLLFTILTTW).

The protein belongs to the HAK/KUP transporter (TC 2.A.72) family.

It localises to the cell inner membrane. It catalyses the reaction K(+)(in) + H(+)(in) = K(+)(out) + H(+)(out). Functionally, transport of potassium into the cell. Likely operates as a K(+):H(+) symporter. This chain is Probable potassium transport system protein Kup 2, found in Paramagnetospirillum magneticum (strain ATCC 700264 / AMB-1) (Magnetospirillum magneticum).